The primary structure comprises 24 residues: M-ectatotoxin-Eb2b (24 aa).

As to expression, expressed by the venom gland.

The protein localises to the secreted. Its function is as follows. Antimicrobial peptide active against Gram-negative bacterium E.coli MH1 (MIC=2.5 uM) and P.aeruginosa PAO1 (MIC=10 uM) and against Gram-positive bacterium A.globiformis VKM Ac-1112 (MIC=0.6 uM). In Ectatomma brunneum (Ant), this protein is M-ectatotoxin-Eb2b.